Here is a 519-residue protein sequence, read N- to C-terminus: Polyamine aminopropyltransferase (519 aa).

Transmembrane regions (helical) follow at residues 17 to 37 (LLLV…LALV), 53 to 73 (LIVA…KPFL), 86 to 106 (LLGL…AVVG), 109 to 129 (LWML…ELPL), 158 to 178 (LGAL…LGMM), 180 to 200 (GAAA…CVLL), and 208 to 228 (QFIR…TVLV). A spermidine synthase region spans residues 200–463 (LRHLLPRAQF…FQLCGPEGTE (264 aa)). One can recognise a PABS domain in the interval 225-459 (TVLVRSDGIV…GDWGFQLCGP (235 aa)). Residue Gln255 coordinates S-methyl-5'-thioadenosine. Asp307 contributes to the spermidine binding site. Residues Glu326 and 358–359 (DA) contribute to the S-methyl-5'-thioadenosine site. Asp379 (proton acceptor) is an active-site residue.

Belongs to the spermidine/spermine synthase family. Homodimer or homotetramer.

The protein localises to the cell membrane. The catalysed reaction is S-adenosyl 3-(methylsulfanyl)propylamine + putrescine = S-methyl-5'-thioadenosine + spermidine + H(+). It participates in amine and polyamine biosynthesis; spermidine biosynthesis; spermidine from putrescine: step 1/1. Functionally, catalyzes the irreversible transfer of a propylamine group from the amino donor S-adenosylmethioninamine (decarboxy-AdoMet) to putrescine (1,4-diaminobutane) to yield spermidine. This chain is Polyamine aminopropyltransferase, found in Corynebacterium efficiens (strain DSM 44549 / YS-314 / AJ 12310 / JCM 11189 / NBRC 100395).